Reading from the N-terminus, the 320-residue chain is Putative olfactory receptor 2W5 pseudogene (320 aa).

N-linked (GlcNAc...) asparagine glycosylation occurs at Asn5. Transmembrane regions (helical) follow at residues 30–50, 58–78, 98–118, and 140–160; these read VILIFCILTLVGNTAIILLLV, PMYFFLGNLSFLDLCFTASIA, VAQLYIYMMLGSTECVLLVVM, and LCLQLVTVAWCCGFLNSFIMC. Cys97 and Cys179 are joined by a disulfide. The tract at residues 267-320 is disordered; that stretch reads LPRSGEVPDSLLHHRHSQHQPPHLHFEEQGCEGDHEETSGVGERGWGASTRGTL. Basic and acidic residues predominate over residues 290-304; it reads LHFEEQGCEGDHEET.

This sequence belongs to the G-protein coupled receptor 1 family.

It is found in the cell membrane. Odorant receptor. This is Putative olfactory receptor 2W5 pseudogene from Homo sapiens (Human).